We begin with the raw amino-acid sequence, 341 residues long: HTH-type transcriptional repressor PurR (341 aa).

The region spanning 2-56 (ATIKDVAKRAGVSTTTVSHVINKTRFVAEETKAAVGAAIKELHYSPSAVARSLKV) is the HTH lacI-type domain. A DNA-binding region (H-T-H motif) is located at residues 4-23 (IKDVAKRAGVSTTTVSHVIN). A DNA-binding region spans residues 48–56 (SAVARSLKV). Positions 73, 190, 192, 221, and 275 each coordinate hypoxanthine.

As to quaternary structure, homodimer.

It participates in purine metabolism; purine nucleotide biosynthesis [regulation]. Functionally, is the main repressor of the genes involved in the de novo synthesis of purine nucleotides, regulating purB, purC, purEK, purF, purHD, purL, purMN and guaBA expression. PurR is allosterically activated to bind its cognate DNA by binding the purine corepressors, hypoxanthine or guanine, thereby effecting transcription repression. This is HTH-type transcriptional repressor PurR from Serratia proteamaculans (strain 568).